Consider the following 357-residue polypeptide: 3'(2'),5'-bisphosphate nucleotidase (357 aa).

Catalysis depends on aspartate 49, which acts as the Proton acceptor. 4 residues coordinate Mg(2+): glutamate 72, aspartate 142, isoleucine 144, and aspartate 145. The Proton acceptor role is filled by threonine 147. Residues threonine 147, histidine 241, serine 264, lysine 267, arginine 281, and aspartate 294 each contribute to the adenosine 3',5'-bisphosphate site. Residues histidine 241, serine 264, lysine 267, arginine 281, and aspartate 294 each contribute to the AMP site. Residue aspartate 294 participates in Mg(2+) binding.

This sequence belongs to the inositol monophosphatase superfamily. The cofactor is Mg(2+).

It localises to the cytoplasm. Its subcellular location is the nucleus. It catalyses the reaction 3'-phosphoadenylyl sulfate + H2O = adenosine 5'-phosphosulfate + phosphate. It carries out the reaction adenosine 3',5'-bisphosphate + H2O = AMP + phosphate. The catalysed reaction is adenosine 2',5'-bisphosphate + H2O = AMP + phosphate. Its activity is regulated as follows. Phosphatase activity is very sensitive to lithium and moderately sensitive to sodium. The inhibitory effects of lithium and sodium are overcome by high concentrations of potassium. Lithium exerts its inhibitory action by blocking the products of the PAP hydrolysis at the active site. In terms of biological role, phosphatase that converts adenosine 3'-phosphate 5'-phosphosulfate (PAPS) to adenosine 5'-phosphosulfate (APS) and 3'(2')-phosphoadenosine 5'-phosphate (PAP) to AMP. May regulate the flux of sulfur in the sulfur-activation pathway by converting PAPS to APS. Involved in salt tolerance. Confers resistance to lithium. Shows no activity on inositol mono- and diphosphates, 3'-AMP, AMP, nicotinamide adenine dinucleotide phosphate (NADP), and p-nitrophenylphosphate. The chain is 3'(2'),5'-bisphosphate nucleotidase (MET22) from Saccharomyces cerevisiae (strain ATCC 204508 / S288c) (Baker's yeast).